We begin with the raw amino-acid sequence, 364 residues long: MDILFYKVFRNLYIKNIIFKILRLYKNYSKKYNVFKNVEQYKLFKDKEYLVKMEWDMNIEIPINLIPDNTIKYLKFGKYFNQPIKSLPIGVELIDLKYSLNFNQNQFQIPITLKTLILNRDFNQNFTKLSNNNNDDDNNNLSLNKVENISFGRDYDCLIDETIFSKSITSIKLSDSFCQELDDRTLPKTLTFLEFGWTFNGYLKIGDLDGLSKLRVLKFGVSFNTEIQCNVLPNSIEKITFGSSFNQVILPNSLPRNLRILKFGSSFNQPIFPPPSSLSSESLPNLLKLKFDSSFNQPILPSSLSNSITRLEFRSTHFNQQLSISSLPKNLKYLGIFINNYSTIIEDNDNNNNSEFLKIINILN.

FNIP repeat units lie at residues 57-98 (MNIE…DLKY), 155-198 (YDCL…FGWT), 214-244 (LRVLKFGVSFNTEIQCNVLPNSIEKITFGSS), 245-271 (FNQVILPNSLPRNLRILKFGSSFNQPI), and 295-340 (FNQP…FINN).

The chain is FNIP repeat-containing protein DDB_G0277323 from Dictyostelium discoideum (Social amoeba).